We begin with the raw amino-acid sequence, 158 residues long: MARFPNPAERPYKLPDLCTALDTTLHDITIDCVYCKTQLQQTEVYEFAFSDLFIVYRNGEPYAACQKCIKFHAKVRELRHYSNSVYATTLESITNTKLYNLSIRCMSCLKPLCPAEKLRHVNTKRRFHQIAGSYTGQCRHCWTSNREDRRRIRRETQV.

Zinc fingers lie at residues 32-68 (CVYC…CQKC) and 105-141 (CMSC…CRHC). The PDZ-binding domain signature appears at 156–158 (TQV).

This sequence belongs to the papillomaviridae E6 protein family. As to quaternary structure, forms homodimers. Interacts with ubiquitin-protein ligase UBE3A/E6-AP and thus forms a complex with human TP53. Interacts with human NFX1 and MAGI3. Interacts with human IRF3; this interaction inhibits the establishment of antiviral state. Interacts with human TYK2; this interaction inhibits JAK-STAT activation by interferon alpha. Interacts with host DLG1; this interaction leads to the proteasomal degradation of DLG1.

It localises to the host cytoplasm. It is found in the host nucleus. Functionally, plays a major role in the induction and maintenance of cellular transformation. Acts mainly as an oncoprotein by stimulating the destruction of many host cell key regulatory proteins. E6 associates with host UBE3A/E6-AP ubiquitin-protein ligase, and inactivates tumor suppressors TP53 and TP73 by targeting them to the 26S proteasome for degradation. In turn, DNA damage and chromosomal instabilities increase and lead to cell proliferation and cancer development. The complex E6/E6AP targets several other substrates to degradation via the proteasome including host DLG1 or NFX1, a repressor of human telomerase reverse transcriptase (hTERT). The resulting increased expression of hTERT prevents the shortening of telomere length leading to cell immortalization. Other cellular targets including BAK1, Fas-associated death domain-containing protein (FADD) and procaspase 8, are degraded by E6/E6AP causing inhibition of apoptosis. E6 also inhibits immune response by interacting with host IRF3 and TYK2. These interactions prevent IRF3 transcriptional activities and inhibit TYK2-mediated JAK-STAT activation by interferon alpha resulting in inhibition of the interferon signaling pathway. The sequence is that of Protein E6 from Homo sapiens (Human).